A 215-amino-acid polypeptide reads, in one-letter code: Ribonuclease HII (215 aa).

Positions 19–213 (QTVAGVDEVG…SLRQPSQQID (195 aa)) constitute an RNase H type-2 domain. Residues Asp-25, Glu-26, and Asp-121 each contribute to the a divalent metal cation site.

This sequence belongs to the RNase HII family. The cofactor is Mn(2+). It depends on Mg(2+) as a cofactor.

The protein resides in the cytoplasm. The enzyme catalyses Endonucleolytic cleavage to 5'-phosphomonoester.. Functionally, endonuclease that specifically degrades the RNA of RNA-DNA hybrids. This is Ribonuclease HII from Synechococcus elongatus (strain ATCC 33912 / PCC 7942 / FACHB-805) (Anacystis nidulans R2).